Here is a 675-residue protein sequence, read N- to C-terminus: MHHVNKYFNQTMVIEALKMSFYKLNPKQLIKNPIMFVVEVGMILTLILICFPDIFGTSYLSRSYLITIFIILLITILFANFSEAFAEGRGKAQADSLRQAQSNLTARLIEENGAYRIVNATELKAGQNIRVENGETIPADGVVINGLATVDESAITGESAPVIKESGGDFDGVIGGTLVTSDWLEIRVESEAGTSFLDKMIALVEGAERNKTPNEIALFTLLTTLTIIFLVVIVTLYPIASYLHLILPIAMLIALTVCLIPTTIGGLLSAIGIAGMDRVTQFNVLAKSGRAVEVCGDVDVMILDKTGTITYGNRIASEFLPVNQQMWEKLIVAAYMSSIYDDTPEGKSIVRLAKQMYINELPKDIDGTYKPFTAETRMSGIITNEISVFKGAPNSMINLVKQQQGDIPLNIESICMDVSSKGGTPLIVIENNVMLGVIYLKDVIKDGLVERFAELRKMGIETVMCTGDNALTAATIAKEAGVDRFVAECKPEDKIKVIKDEQAKGHIVAMTGDGTNDAPALAQANIGLAMNSGTISAKEAANLIDLDSNPTKLIEVVKIGKQLLMTRGALTTFSLANDVAKYFAILPALMMSTIPEMTLLNIMHLSSPKSAIISALIFNALIIVALIPIAMKGVKVKGYSIDRIFINNMLIYGLGGLIVPFLGIKLIDMIVQFFV.

A run of 4 helical transmembrane segments spans residues 34-54, 65-85, 216-236, and 245-265; these read IMFV…FPDI, LITI…SEAF, IALF…IVTL, and LILP…TTIG. D304 (4-aspartylphosphate intermediate) is an active-site residue. Residues D341, E345, 372 to 379, and K390 contribute to the ATP site; that span reads FTAETRMS. The Mg(2+) site is built by D513 and D517. A run of 3 helical transmembrane segments spans residues 569-591, 611-631, and 644-664; these read ALTT…ALMM, AIIS…PIAM, and IFIN…FLGI.

Belongs to the cation transport ATPase (P-type) (TC 3.A.3) family. Type IA subfamily. The system is composed of three essential subunits: KdpA, KdpB and KdpC.

Its subcellular location is the cell membrane. The enzyme catalyses K(+)(out) + ATP + H2O = K(+)(in) + ADP + phosphate + H(+). Part of the high-affinity ATP-driven potassium transport (or Kdp) system, which catalyzes the hydrolysis of ATP coupled with the electrogenic transport of potassium into the cytoplasm. This subunit is responsible for energy coupling to the transport system and for the release of the potassium ions to the cytoplasm. In Staphylococcus aureus (strain bovine RF122 / ET3-1), this protein is Potassium-transporting ATPase ATP-binding subunit.